The primary structure comprises 207 residues: MSAFNWSAIAFILAAIALVVFMLVVPRLLGGRSHGSQKEEIFEAGVVGSGNARIRLSAKFYLVAIFFVIFDLEALYLYAYAVSVREAGWLGFAAAAIFITILIIGLVYELSLGAMNWAPADKLRKKARLYAAPAGFSLADITKFDGVDELMVDPTGKIPAQSSGQINVSNNIETNRRHLQNIDHINTTGNVTSVDFATSAQTDNIKR.

The next 3 membrane-spanning stretches (helical) occupy residues 6-26 (WSAI…LVVP), 62-82 (LVAI…AYAV), and 87-107 (AGWL…IGLV).

It belongs to the complex I subunit 3 family. In terms of assembly, NDH-1 is composed of 14 different subunits. Subunits NuoA, H, J, K, L, M, N constitute the membrane sector of the complex.

It localises to the cell inner membrane. The catalysed reaction is a quinone + NADH + 5 H(+)(in) = a quinol + NAD(+) + 4 H(+)(out). Functionally, NDH-1 shuttles electrons from NADH, via FMN and iron-sulfur (Fe-S) centers, to quinones in the respiratory chain. The immediate electron acceptor for the enzyme in this species is believed to be ubiquinone. Couples the redox reaction to proton translocation (for every two electrons transferred, four hydrogen ions are translocated across the cytoplasmic membrane), and thus conserves the redox energy in a proton gradient. The sequence is that of NADH-quinone oxidoreductase subunit A from Psychrobacter arcticus (strain DSM 17307 / VKM B-2377 / 273-4).